Here is a 173-residue protein sequence, read N- to C-terminus: Cytochrome b6-f complex subunit 4, chloroplastic (173 aa).

Residues 1–14 (ESALERRSSSVVMN) constitute a chloroplast transit peptide. Helical transmembrane passes span 49 to 69 (LLYM…GLAV), 108 to 128 (LLGV…PFIE), and 144 to 164 (SVFL…TLPI).

This sequence belongs to the cytochrome b family. PetD subfamily. As to quaternary structure, the 4 large subunits of the cytochrome b6-f complex are cytochrome b6, subunit IV (17 kDa polypeptide, petD), cytochrome f and the Rieske protein, while the 4 small subunits are petG, petL, petM and petN. The complex functions as a dimer.

Its subcellular location is the plastid. The protein localises to the chloroplast thylakoid membrane. Functionally, component of the cytochrome b6-f complex, which mediates electron transfer between photosystem II (PSII) and photosystem I (PSI), cyclic electron flow around PSI, and state transitions. This chain is Cytochrome b6-f complex subunit 4, chloroplastic, found in Euglena gracilis.